Reading from the N-terminus, the 130-residue chain is Glycine cleavage system H protein (130 aa).

Residues 24-106 form the Lipoyl-binding domain; sequence IYSVGITEHA…YTDGWLFRIK (83 aa). At lysine 65 the chain carries N6-lipoyllysine.

This sequence belongs to the GcvH family. As to quaternary structure, the glycine cleavage system is composed of four proteins: P, T, L and H. (R)-lipoate serves as cofactor.

The glycine cleavage system catalyzes the degradation of glycine. The H protein shuttles the methylamine group of glycine from the P protein to the T protein. This Pectobacterium atrosepticum (strain SCRI 1043 / ATCC BAA-672) (Erwinia carotovora subsp. atroseptica) protein is Glycine cleavage system H protein.